A 300-amino-acid chain; its full sequence is NAD kinase (300 aa).

Asp75 serves as the catalytic Proton acceptor. NAD(+) is bound by residues 75 to 76 (DG), 149 to 150 (ND), Arg177, Asp179, 190 to 195 (TAYALS), Ala214, and Gln248.

This sequence belongs to the NAD kinase family. The cofactor is a divalent metal cation.

The protein localises to the cytoplasm. It carries out the reaction NAD(+) + ATP = ADP + NADP(+) + H(+). Functionally, involved in the regulation of the intracellular balance of NAD and NADP, and is a key enzyme in the biosynthesis of NADP. Catalyzes specifically the phosphorylation on 2'-hydroxyl of the adenosine moiety of NAD to yield NADP. The protein is NAD kinase of Burkholderia multivorans (strain ATCC 17616 / 249).